A 96-amino-acid chain; its full sequence is Protein Vpr (96 aa).

The segment at 1-42 (MEQAPEDQGPQREPHNEWTLELLEELKNEAVRHFPRIWLHGL) is homooligomerization. S79, S94, and S96 each carry phosphoserine; by host.

This sequence belongs to the HIV-1 VPR protein family. As to quaternary structure, homooligomer, may form homodimer. Interacts with p6-gag region of the Pr55 Gag precursor protein through a (Leu-X-X)4 motif near the C-terminus of the P6gag protein. Interacts with host UNG. May interact with host RAD23A/HHR23A. Interacts with host VPRBP/DCAF1, leading to hijack the CUL4A-RBX1-DDB1-DCAF1/VPRBP complex, mediating ubiquitination of host proteins such as TERT and ZGPAT and arrest of the cell cycle in G2 phase. Phosphorylated on several residues by host. These phosphorylations regulate VPR activity for the nuclear import of the HIV-1 pre-integration complex.

The protein resides in the virion. It localises to the host nucleus. It is found in the host extracellular space. Its function is as follows. During virus entry, plays a role in the transport of the viral pre-integration (PIC) complex to the host nucleus. This function is crucial for viral infection of non-dividing macrophages. May act directly at the nuclear pore complex, by binding nucleoporins phenylalanine-glycine (FG)-repeat regions. During virus replication, may deplete host UNG protein, and incude G2-M cell cycle arrest. Acts by targeting specific host proteins for degradation by the 26S proteasome, through association with the cellular CUL4A-DDB1 E3 ligase complex by direct interaction with host VPRPB/DCAF-1. Cell cycle arrest reportedly occurs within hours of infection and is not blocked by antiviral agents, suggesting that it is initiated by the VPR carried into the virion. Additionally, VPR induces apoptosis in a cell cycle dependent manner suggesting that these two effects are mechanistically linked. Detected in the serum and cerebrospinal fluid of AIDS patient, VPR may also induce cell death to bystander cells. The chain is Protein Vpr from Human immunodeficiency virus type 1 group M subtype B (isolate BRU/LAI) (HIV-1).